The chain runs to 310 residues: MVKVYAPASIGNVSVGFDVLGAAVSPVDGTLLGDCVSVSRADSFSLQSAGRFVDKLPAEPEQNIVYQCWQRFCEAVGETVPVAMLLEKNMPIGSGLGSSACSVVVALVAMNAHCGRPLNDDQMLMLMGEMEGRISGGVHFDNVAPCFLGGMQLMLEENGIISQTVPGFDDWLWVMAYPGIKVSTAEARAILPAQYRRQDCISHGRYLACFVHACHTRQPALAAKLMKDVIAEPYRTRLLPGFADARQAVGDIGALACGISGSGPTLFAICDRQDTASRVADWLTQHYLQNDEGFVHICRLDTSGARLMMD.

An ATP-binding site is contributed by 91 to 101 (PIGSGLGSSAC).

The protein belongs to the GHMP kinase family. Homoserine kinase subfamily.

Its subcellular location is the cytoplasm. It carries out the reaction L-homoserine + ATP = O-phospho-L-homoserine + ADP + H(+). The protein operates within amino-acid biosynthesis; L-threonine biosynthesis; L-threonine from L-aspartate: step 4/5. Functionally, catalyzes the ATP-dependent phosphorylation of L-homoserine to L-homoserine phosphate. The polypeptide is Homoserine kinase (Sodalis glossinidius (strain morsitans)).